A 415-amino-acid polypeptide reads, in one-letter code: MDYRVKDLSLAEQGRKQIEWAELHMPALMEIRKRFNAEKPLDGIRIGAVLHVTKETAVLVETLKAGGAEIALAGSNPLSTQDDVAAGLAKNGIHVYAWRGETEKDYYDNIREILKYEPHVIMDDGGDLHAYVHENNLTSKIVGGTEETTTGVIRLKAMEEEKVLKYPVIAVNNAFTKYLFDNRIGTGQSTIDGILRATNILIAGKVAVVIGYGWVGRGIASRFKGMGARVIVVESSPFRALEALMDGFDVMTMNRASEIGDIFVTATGNLNVVSRDHILRMKDGAVLANSGHFNVEIDVKGLKEISVETREVRQNLEEYKLRNGKRIYLLADGRLVNLVAAEGHPSEVMDLSFCNQALSVEHLIKNKGKLENKVYNVPIEIDEQVARLKLKALGIEIEELTIEQKEYIKQWKYGT.

Positions 53, 124, and 147 each coordinate substrate. 148 to 150 (TTT) is a binding site for NAD(+). Positions 177 and 181 each coordinate substrate. Residues N182, 211-216 (GYGWVG), E234, N269, 290-292 (SGH), and N337 contribute to the NAD(+) site.

It belongs to the adenosylhomocysteinase family. NAD(+) serves as cofactor.

It is found in the cytoplasm. The enzyme catalyses S-adenosyl-L-homocysteine + H2O = L-homocysteine + adenosine. It participates in amino-acid biosynthesis; L-homocysteine biosynthesis; L-homocysteine from S-adenosyl-L-homocysteine: step 1/1. In terms of biological role, may play a key role in the regulation of the intracellular concentration of adenosylhomocysteine. The sequence is that of Adenosylhomocysteinase from Sulfolobus acidocaldarius (strain ATCC 33909 / DSM 639 / JCM 8929 / NBRC 15157 / NCIMB 11770).